Here is a 347-residue protein sequence, read N- to C-terminus: NADH-quinone oxidoreductase subunit H 1 (347 aa).

9 helical membrane-spanning segments follow: residues I14 to L34, P50 to F70, I83 to P103, V115 to G135, I161 to V181, F198 to L218, A258 to V278, V286 to V306, and L321 to L341.

It belongs to the complex I subunit 1 family. NDH-1 is composed of 14 different subunits. Subunits NuoA, H, J, K, L, M, N constitute the membrane sector of the complex.

The protein localises to the cell inner membrane. It carries out the reaction a quinone + NADH + 5 H(+)(in) = a quinol + NAD(+) + 4 H(+)(out). NDH-1 shuttles electrons from NADH, via FMN and iron-sulfur (Fe-S) centers, to quinones in the respiratory chain. The immediate electron acceptor for the enzyme in this species is believed to be ubiquinone. Couples the redox reaction to proton translocation (for every two electrons transferred, four hydrogen ions are translocated across the cytoplasmic membrane), and thus conserves the redox energy in a proton gradient. This subunit may bind ubiquinone. This Rhizobium meliloti (strain 1021) (Ensifer meliloti) protein is NADH-quinone oxidoreductase subunit H 1.